The sequence spans 393 residues: NAD(P)H-quinone oxidoreductase subunit H, chloroplastic (393 aa).

Belongs to the complex I 49 kDa subunit family. As to quaternary structure, NDH is composed of at least 16 different subunits, 5 of which are encoded in the nucleus.

Its subcellular location is the plastid. The protein resides in the chloroplast thylakoid membrane. The catalysed reaction is a plastoquinone + NADH + (n+1) H(+)(in) = a plastoquinol + NAD(+) + n H(+)(out). It catalyses the reaction a plastoquinone + NADPH + (n+1) H(+)(in) = a plastoquinol + NADP(+) + n H(+)(out). In terms of biological role, NDH shuttles electrons from NAD(P)H:plastoquinone, via FMN and iron-sulfur (Fe-S) centers, to quinones in the photosynthetic chain and possibly in a chloroplast respiratory chain. The immediate electron acceptor for the enzyme in this species is believed to be plastoquinone. Couples the redox reaction to proton translocation, and thus conserves the redox energy in a proton gradient. The polypeptide is NAD(P)H-quinone oxidoreductase subunit H, chloroplastic (Solanum tuberosum (Potato)).